The sequence spans 443 residues: L-seryl-tRNA(Sec) selenium transferase (443 aa).

Lys285 bears the N6-(pyridoxal phosphate)lysine mark.

It belongs to the SelA family. It depends on pyridoxal 5'-phosphate as a cofactor.

Its subcellular location is the cytoplasm. The catalysed reaction is L-seryl-tRNA(Sec) + selenophosphate + H(+) = L-selenocysteinyl-tRNA(Sec) + phosphate. The protein operates within aminoacyl-tRNA biosynthesis; selenocysteinyl-tRNA(Sec) biosynthesis; selenocysteinyl-tRNA(Sec) from L-seryl-tRNA(Sec) (bacterial route): step 1/1. Functionally, converts seryl-tRNA(Sec) to selenocysteinyl-tRNA(Sec) required for selenoprotein biosynthesis. This chain is L-seryl-tRNA(Sec) selenium transferase, found in Campylobacter lari (strain RM2100 / D67 / ATCC BAA-1060).